A 358-amino-acid polypeptide reads, in one-letter code: Phosphoserine aminotransferase (358 aa).

Position 43 (Arg-43) interacts with L-glutamate. Trp-103, Thr-153, Asp-172, and Gln-195 together coordinate pyridoxal 5'-phosphate. The residue at position 196 (Lys-196) is an N6-(pyridoxal phosphate)lysine. 236–237 is a pyridoxal 5'-phosphate binding site; the sequence is NT.

The protein belongs to the class-V pyridoxal-phosphate-dependent aminotransferase family. SerC subfamily. In terms of assembly, homodimer. Pyridoxal 5'-phosphate is required as a cofactor.

It localises to the cytoplasm. The enzyme catalyses O-phospho-L-serine + 2-oxoglutarate = 3-phosphooxypyruvate + L-glutamate. The catalysed reaction is 4-(phosphooxy)-L-threonine + 2-oxoglutarate = (R)-3-hydroxy-2-oxo-4-phosphooxybutanoate + L-glutamate. The protein operates within amino-acid biosynthesis; L-serine biosynthesis; L-serine from 3-phospho-D-glycerate: step 2/3. Its pathway is cofactor biosynthesis; pyridoxine 5'-phosphate biosynthesis; pyridoxine 5'-phosphate from D-erythrose 4-phosphate: step 3/5. Its function is as follows. Catalyzes the reversible conversion of 3-phosphohydroxypyruvate to phosphoserine and of 3-hydroxy-2-oxo-4-phosphonooxybutanoate to phosphohydroxythreonine. The polypeptide is Phosphoserine aminotransferase (Dichelobacter nodosus (strain VCS1703A)).